The following is a 144-amino-acid chain: 3-dehydroquinate dehydratase (144 aa).

The active-site Proton acceptor is Tyr23. 3 residues coordinate substrate: Asn74, His80, and Asp87. The active-site Proton donor is the His100. Substrate is bound by residues 101 to 102 and Arg111; that span reads LS.

It belongs to the type-II 3-dehydroquinase family. Homododecamer.

The enzyme catalyses 3-dehydroquinate = 3-dehydroshikimate + H2O. It functions in the pathway metabolic intermediate biosynthesis; chorismate biosynthesis; chorismate from D-erythrose 4-phosphate and phosphoenolpyruvate: step 3/7. Catalyzes a trans-dehydration via an enolate intermediate. This chain is 3-dehydroquinate dehydratase, found in Haemophilus ducreyi (strain 35000HP / ATCC 700724).